A 193-amino-acid chain; its full sequence is Acyl carrier protein phosphodiesterase (193 aa).

Belongs to the AcpH family.

The enzyme catalyses holo-[ACP] + H2O = apo-[ACP] + (R)-4'-phosphopantetheine + H(+). Converts holo-ACP to apo-ACP by hydrolytic cleavage of the phosphopantetheine prosthetic group from ACP. The sequence is that of Acyl carrier protein phosphodiesterase from Salmonella choleraesuis (strain SC-B67).